A 460-amino-acid polypeptide reads, in one-letter code: NADH-ubiquinone oxidoreductase chain 4 (460 aa).

12 consecutive transmembrane segments (helical) span residues 20–42, 61–81, 93–113, 114–134, 148–168, 195–215, 225–245, 258–278, 285–304, 309–331, 351–371, and 394–414; these read PKWL…LTWL, PLST…VLAS, QRLY…AFGA, TEII…LIII, TYFL…LLLL, IWWA…GVHL, PVAG…YGMM, LAYP…SICL, SLIA…GILI, GFTG…FCLA, MIFP…LALP, and IILT…LFLM.

The protein belongs to the complex I subunit 4 family.

It localises to the mitochondrion membrane. The catalysed reaction is a ubiquinone + NADH + 5 H(+)(in) = a ubiquinol + NAD(+) + 4 H(+)(out). Its function is as follows. Core subunit of the mitochondrial membrane respiratory chain NADH dehydrogenase (Complex I) that is believed to belong to the minimal assembly required for catalysis. Complex I functions in the transfer of electrons from NADH to the respiratory chain. The immediate electron acceptor for the enzyme is believed to be ubiquinone. In Formosania lacustris (Oriental stream loach), this protein is NADH-ubiquinone oxidoreductase chain 4 (MT-ND4).